Reading from the N-terminus, the 181-residue chain is Transcription factor bHLH167 (181 aa).

Positions 1 to 22 are disordered; it reads MGRAREIGEGNSSSLREQRNLR. In terms of domain architecture, bHLH spans 14 to 63; sequence SLREQRNLREKDRRMRMKHLFSILSSHVSPTRKLPVPHLIDQATSYMIQL.

This sequence belongs to the bHLH protein family.

It localises to the nucleus. This is Transcription factor bHLH167 from Arabidopsis thaliana (Mouse-ear cress).